The sequence spans 180 residues: NAD(P)H-quinone oxidoreductase subunit I, chloroplastic (180 aa).

4Fe-4S ferredoxin-type domains are found at residues 55–84 (GRIH…VDWR) and 95–124 (LNYS…MTEE). Residues Cys-64, Cys-67, Cys-70, Cys-74, Cys-104, Cys-107, Cys-110, and Cys-114 each coordinate [4Fe-4S] cluster.

It belongs to the complex I 23 kDa subunit family. In terms of assembly, NDH is composed of at least 16 different subunits, 5 of which are encoded in the nucleus. It depends on [4Fe-4S] cluster as a cofactor.

The protein resides in the plastid. Its subcellular location is the chloroplast thylakoid membrane. The enzyme catalyses a plastoquinone + NADH + (n+1) H(+)(in) = a plastoquinol + NAD(+) + n H(+)(out). The catalysed reaction is a plastoquinone + NADPH + (n+1) H(+)(in) = a plastoquinol + NADP(+) + n H(+)(out). In terms of biological role, NDH shuttles electrons from NAD(P)H:plastoquinone, via FMN and iron-sulfur (Fe-S) centers, to quinones in the photosynthetic chain and possibly in a chloroplast respiratory chain. The immediate electron acceptor for the enzyme in this species is believed to be plastoquinone. Couples the redox reaction to proton translocation, and thus conserves the redox energy in a proton gradient. The polypeptide is NAD(P)H-quinone oxidoreductase subunit I, chloroplastic (Amborella trichopoda).